The following is a 449-amino-acid chain: MGRLERQLMEAYIRQKRASPGMVQASDLQINRPMSGMRSNSRELHAYDGPMQFISSPQNPDQILSNGSPGGIAPATINTSRNHSNNMRSLSTINQEADLIEEISSHELEDEESSPVTVIEQHSAVHSANSTQSQRPRPRQHSFSDTLDEDDYTNRNVAAAAPVRPAGVPSSPYKEATLDGSSNGTGNGTGGESEGDVIGNIDQFVMQPAPQGVLYKCRITRDRKGMDRGLFPIYYLHLERDYGKKIFLLGGRKRKKSKTSNYIVSCDPTDLSRNADGFCGKLRSNVFGTSFTVFDNGNKESTESPRLDLAVIIYDTNILGFKGPRNMTVILPGMTEDDQRVKISSADPKQQGILDLWKMKNMDNIVELHNKTPVWNDETQSYVLNFHGRVTQASVKNFQLVHDSDPEYIVMQFGRTSEDVFTMDYRYPLCAMQAFAIALSSFDGKIACE.

A disordered region spans residues 123-197 (SAVHSANSTQ…GTGGESEGDV (75 aa)). Residues 124-145 (AVHSANSTQSQRPRPRQHSFSD) are compositionally biased toward polar residues. Ser142 bears the Phosphoserine mark. The segment covering 154–166 (NRNVAAAAPVRPA) has biased composition (low complexity). Positions 183 to 192 (NGTGNGTGGE) are enriched in gly residues.

This sequence belongs to the TUB family.

It localises to the cytoplasm. It is found in the nucleus. The protein resides in the cell projection. Its subcellular location is the cilium membrane. The protein localises to the rhabdomere. This Drosophila ananassae (Fruit fly) protein is Protein king tubby.